Consider the following 104-residue polypeptide: Co-chaperonin GroES 2 (104 aa).

It belongs to the GroES chaperonin family. As to quaternary structure, heptamer of 7 subunits arranged in a ring. Interacts with the chaperonin GroEL.

The protein resides in the cytoplasm. In terms of biological role, together with the chaperonin GroEL, plays an essential role in assisting protein folding. The GroEL-GroES system forms a nano-cage that allows encapsulation of the non-native substrate proteins and provides a physical environment optimized to promote and accelerate protein folding. GroES binds to the apical surface of the GroEL ring, thereby capping the opening of the GroEL channel. This chain is Co-chaperonin GroES 2, found in Bradyrhizobium diazoefficiens (strain JCM 10833 / BCRC 13528 / IAM 13628 / NBRC 14792 / USDA 110).